Here is a 469-residue protein sequence, read N- to C-terminus: 1-aminocyclopropane-1-carboxylate synthase 3 (469 aa).

The residue at position 272 (Lys-272) is an N6-(pyridoxal phosphate)lysine. Residues 432–452 (APNATNHQNQQQSNANSKKKS) are disordered. The segment covering 437-447 (NHQNQQQSNAN) has biased composition (low complexity).

Belongs to the class-I pyridoxal-phosphate-dependent aminotransferase family. Homodimer. Pyridoxal 5'-phosphate is required as a cofactor.

It carries out the reaction S-adenosyl-L-methionine = 1-aminocyclopropane-1-carboxylate + S-methyl-5'-thioadenosine + H(+). The protein operates within alkene biosynthesis; ethylene biosynthesis via S-adenosyl-L-methionine; ethylene from S-adenosyl-L-methionine: step 1/2. Functionally, catalyzes the formation of 1-aminocyclopropane-1-carboxylate, a direct precursor of ethylene in higher plants. The protein is 1-aminocyclopropane-1-carboxylate synthase 3 (ACS3) of Solanum lycopersicum (Tomato).